Reading from the N-terminus, the 303-residue chain is Polyisoprenyl-teichoic acid--peptidoglycan teichoic acid transferase TagU (303 aa).

Topologically, residues 1-6 are cytoplasmic; the sequence is MSKGKK. Residues 7–27 form a helical; Signal-anchor for type II membrane protein membrane-spanning segment; sequence IFAIIFGIILVLFLAVVGMGA. The Extracellular portion of the chain corresponds to 28-303; that stretch reads KLYWDVSKSM…QELKNQLNTK (276 aa).

Belongs to the LytR/CpsA/Psr (LCP) family.

Its subcellular location is the cell membrane. It participates in cell wall biogenesis. Its function is as follows. May catalyze the final step in cell wall teichoic acid biosynthesis, the transfer of the anionic cell wall polymers (APs) from their lipid-linked precursor to the cell wall peptidoglycan (PG). This Enterococcus faecalis (strain ATCC 700802 / V583) protein is Polyisoprenyl-teichoic acid--peptidoglycan teichoic acid transferase TagU.